The primary structure comprises 94 residues: ESAT-6-like protein EsxI (94 aa).

The protein belongs to the WXG100 family. ESAT-6 subfamily.

Its subcellular location is the secreted. The sequence is that of ESAT-6-like protein EsxI from Mycobacterium tuberculosis (strain ATCC 25618 / H37Rv).